A 197-amino-acid polypeptide reads, in one-letter code: dITP/XTP pyrophosphatase (197 aa).

A substrate-binding site is contributed by 10-15; that stretch reads TKNQGK. Aspartate 70 functions as the Proton acceptor in the catalytic mechanism. Residue aspartate 70 participates in Mg(2+) binding. Residues serine 71, 151 to 154, lysine 173, and 178 to 179 each bind substrate; these read FGYD and HR.

The protein belongs to the HAM1 NTPase family. As to quaternary structure, homodimer. It depends on Mg(2+) as a cofactor.

It catalyses the reaction XTP + H2O = XMP + diphosphate + H(+). The enzyme catalyses dITP + H2O = dIMP + diphosphate + H(+). It carries out the reaction ITP + H2O = IMP + diphosphate + H(+). Functionally, pyrophosphatase that catalyzes the hydrolysis of nucleoside triphosphates to their monophosphate derivatives, with a high preference for the non-canonical purine nucleotides XTP (xanthosine triphosphate), dITP (deoxyinosine triphosphate) and ITP. Seems to function as a house-cleaning enzyme that removes non-canonical purine nucleotides from the nucleotide pool, thus preventing their incorporation into DNA/RNA and avoiding chromosomal lesions. This chain is dITP/XTP pyrophosphatase, found in Symbiobacterium thermophilum (strain DSM 24528 / JCM 14929 / IAM 14863 / T).